The primary structure comprises 105 residues: MESSEVLQEIREVNLAYLLLAQRLVRENQVEAMFRLGVSKEIADILAKLTSAQLVKLAASNMVLCRFRFDDHALLSTLTHTAKNHDMQQMHAAILLARQPVESLN.

The protein belongs to the FlhD family. In terms of assembly, homodimer; disulfide-linked. Forms a heterohexamer composed of two FlhC and four FlhD subunits. Each FlhC binds a FlhD dimer, forming a heterotrimer, and a hexamer assembles by dimerization of two heterotrimers.

It is found in the cytoplasm. In terms of biological role, functions in complex with FlhC as a master transcriptional regulator that regulates transcription of several flagellar and non-flagellar operons by binding to their promoter region. Activates expression of class 2 flagellar genes, including fliA, which is a flagellum-specific sigma factor that turns on the class 3 genes. Also regulates genes whose products function in a variety of physiological pathways. This chain is Flagellar transcriptional regulator FlhD, found in Cupriavidus pinatubonensis (strain JMP 134 / LMG 1197) (Cupriavidus necator (strain JMP 134)).